The sequence spans 538 residues: Non-specific phospholipase C4 (538 aa).

The segment at 91 to 112 (KPWDSGKPDPNPGHPNMSGFAQ) is disordered.

This sequence belongs to the bacterial phospholipase C family. Expressed in root tips, cotyledons, on leaf margins, stems, young anthers and funiculus.

The protein localises to the cell membrane. It catalyses the reaction a 1,2-diacyl-sn-glycero-3-phosphocholine + H2O = phosphocholine + a 1,2-diacyl-sn-glycerol + H(+). Its function is as follows. Non-specific phospholipase C (PLC) which assumes major PLC activity during inorganic phosphate starvation. Substrate preference is phosphatidylcholine (PC), but can also hydrolyze phosphatidylethanolamine (PE) with lower efficiency. Has no activity toward phosphatidic acid (PA). Plays an important role in the supply of both inorganic phosphate and diacylglycerol from membrane-localized phospholipids during phosphate deprivation. May be required for lipid-derived signaling molecules that positively modulate abscisic acid (ABA) response and promote plant tolerance to drought and salt stresses. May be involved in brassinolide-mediated signaling in root development. In Arabidopsis thaliana (Mouse-ear cress), this protein is Non-specific phospholipase C4 (NPC4).